The following is a 650-amino-acid chain: MGIKGLTKFIADAAPNAIKEIKIESLMGRIIAIDASMSLYQFIIAIRDSEQYGNLTNESGETTSHISGLMSRSIRLMENGLKPIYVFDGAPPELKGSELEKRGEKRQKAEELLKKAKEEGNLEEIKKQSGRTVRVTRKQNEEAKKLLTLMGIPIIEAPCEAESQCAFLTKYNLAHATATEDADALVFGTKILIRNLNANATSNQNKNKNNSKRGYILTEINLEQVLKGLNLTMDEFIDFCILCGCDYCDTIKGIGSKTAYNLIKEYNCIEKIIENIDQNKYQVPSNFRFQEARKSFINPNVLPKEDIKIDWNEPQIEELKHFLIKDYNFNELRVTNYINRLLKARKVTTQRRLDNFFTACTKKSTKLIVEETKKEQTLPARKGKKRPTAGDKNKQKAVKRKIEQANANGHHKMKEENKSVDNEKNEDGIKSVDNEKNEDGIKSVDDEKNLDDEKNLDDEKNKDDEKKSLDNFSSNLFDSDKESESGNIIKNEKQNMDDEKINDNLPSLFGDHSRIRHTENKDNISDINNNNNNNNNNSSSNNNNISNNHFNSVSSNSTFNSSTKLKSEDTLKSNSPLKEDSPNSYNNIKNNNHTININSQINNHKEPISNNNLNNINNSTEIKKKNTLFLLPFCPKDVTNVKKKKYTQRC.

The N-domain stretch occupies residues 1-106 (MGIKGLTKFI…SELEKRGEKR (106 aa)). D34 provides a ligand contact to Mg(2+). DNA-binding residues include R47 and R72. Mg(2+) is bound by residues D88, E160, E162, D181, and D183. Residues 124–266 (EIKKQSGRTV…KTAYNLIKEY (143 aa)) form an I-domain region. E160 lines the DNA pocket. DNA is bound by residues G244 and D246. D246 contacts Mg(2+). An interaction with PCNA region spans residues 349 to 357 (TQRRLDNFF). Positions 371 to 592 (ETKKEQTLPA…NSYNNIKNNN (222 aa)) are disordered. Basic and acidic residues-rich tracts occupy residues 413–469 (MKEE…KKSL), 478–502 (DSDK…EKIN), and 511–524 (DHSR…KDNI). The segment covering 525–562 (SDINNNNNNNNNNSSSNNNNISNNHFNSVSSNSTFNSS) has biased composition (low complexity). Positions 565-581 (LKSEDTLKSNSPLKEDS) are enriched in basic and acidic residues. Over residues 582–592 (PNSYNNIKNNN) the composition is skewed to low complexity.

The protein belongs to the XPG/RAD2 endonuclease family. FEN1 subfamily. In terms of assembly, interacts with PCNA1 and PCNA2. Three molecules of FEN1 bind to one PCNA trimer with each molecule binding to one PCNA monomer. PCNA stimulates the nuclease activity without altering cleavage specificity. It depends on Mg(2+) as a cofactor. In terms of processing, phosphorylated. Phosphorylation upon DNA damage induces relocalization to the nuclear plasma.

It localises to the nucleus. The protein localises to the nucleolus. It is found in the nucleoplasm. Its subcellular location is the mitochondrion. With respect to regulation, inhibited by monovalent metal ions. In terms of biological role, structure-specific nuclease with 5'-flap endonuclease and 5'-3' exonuclease activities involved in DNA replication and repair. During DNA replication, cleaves the 5'-overhanging flap structure that is generated by displacement synthesis when DNA polymerase encounters the 5'-end of a downstream Okazaki fragment. It enters the flap from the 5'-end and then tracks to cleave the flap base, leaving a nick for ligation. Also involved in the long patch base excision repair (LP-BER) pathway, by cleaving within the apurinic/apyrimidinic (AP) site-terminated flap. Acts as a genome stabilization factor that prevents flaps from equilibrating into structures that lead to duplications and deletions. Also possesses 5'-3' exonuclease activity on nicked or gapped double-stranded DNA, and exhibits RNase H activity. Also involved in replication and repair of rDNA and in repairing mitochondrial DNA. This chain is Flap endonuclease 1, found in Plasmodium falciparum.